The following is a 312-amino-acid chain: Dihydroorotate dehydrogenase B (NAD(+)), catalytic subunit (312 aa).

FMN-binding positions include serine 23 and 47–48 (KA). Residues lysine 47 and 71 to 75 (NAIGL) each bind substrate. Residues asparagine 102 and asparagine 130 each coordinate FMN. Residue asparagine 130 coordinates substrate. Cysteine 133 acts as the Nucleophile in catalysis. FMN contacts are provided by lysine 168 and isoleucine 194. 195-196 (NT) contacts substrate. FMN contacts are provided by residues glycine 220, 246 to 247 (GG), and 268 to 269 (GT).

The protein belongs to the dihydroorotate dehydrogenase family. Type 1 subfamily. Heterotetramer of 2 PyrK and 2 PyrD type B subunits. Requires FMN as cofactor.

It is found in the cytoplasm. The enzyme catalyses (S)-dihydroorotate + NAD(+) = orotate + NADH + H(+). It participates in pyrimidine metabolism; UMP biosynthesis via de novo pathway; orotate from (S)-dihydroorotate (NAD(+) route): step 1/1. Its function is as follows. Catalyzes the conversion of dihydroorotate to orotate with NAD(+) as electron acceptor. This Enterococcus faecalis (strain ATCC 700802 / V583) protein is Dihydroorotate dehydrogenase B (NAD(+)), catalytic subunit (pyrDB).